A 186-amino-acid chain; its full sequence is Ribosome-recycling factor (186 aa).

This sequence belongs to the RRF family.

Its subcellular location is the cytoplasm. In terms of biological role, responsible for the release of ribosomes from messenger RNA at the termination of protein biosynthesis. May increase the efficiency of translation by recycling ribosomes from one round of translation to another. The protein is Ribosome-recycling factor of Rickettsia felis (strain ATCC VR-1525 / URRWXCal2) (Rickettsia azadi).